Here is a 216-residue protein sequence, read N- to C-terminus: tRNA (guanine-N(7)-)-methyltransferase (216 aa).

S-adenosyl-L-methionine contacts are provided by Glu-44, Glu-69, Asn-97, and Asp-119. Asp-119 is an active-site residue. Substrate-binding positions include Lys-123, Asp-155, and Thr-192–Glu-195.

The protein belongs to the class I-like SAM-binding methyltransferase superfamily. TrmB family.

The catalysed reaction is guanosine(46) in tRNA + S-adenosyl-L-methionine = N(7)-methylguanosine(46) in tRNA + S-adenosyl-L-homocysteine. Its pathway is tRNA modification; N(7)-methylguanine-tRNA biosynthesis. In terms of biological role, catalyzes the formation of N(7)-methylguanine at position 46 (m7G46) in tRNA. This chain is tRNA (guanine-N(7)-)-methyltransferase, found in Lysinibacillus sphaericus (strain C3-41).